Here is a 364-residue protein sequence, read N- to C-terminus: Chaperone protein DnaJ (364 aa).

Residues 4-69 form the J domain; it reads DYYEILGLSK…NKKAKYDRFG (66 aa). A CR-type zinc finger spans residues 135-213; the sequence is GYKNNINITR…CKGKGSLTKQ (79 aa). Zn(2+) is bound by residues Cys148, Cys151, Cys165, Cys168, Cys187, Cys190, Cys201, and Cys204. CXXCXGXG motif repeat units follow at residues 148-155, 165-172, 187-194, and 201-208; these read CDSCLGKK, CNMCNGSG, CSKCYGEG, and CKSCKGKG.

The protein belongs to the DnaJ family. In terms of assembly, homodimer. Requires Zn(2+) as cofactor.

The protein localises to the cytoplasm. Functionally, participates actively in the response to hyperosmotic and heat shock by preventing the aggregation of stress-denatured proteins and by disaggregating proteins, also in an autonomous, DnaK-independent fashion. Unfolded proteins bind initially to DnaJ; upon interaction with the DnaJ-bound protein, DnaK hydrolyzes its bound ATP, resulting in the formation of a stable complex. GrpE releases ADP from DnaK; ATP binding to DnaK triggers the release of the substrate protein, thus completing the reaction cycle. Several rounds of ATP-dependent interactions between DnaJ, DnaK and GrpE are required for fully efficient folding. Also involved, together with DnaK and GrpE, in the DNA replication of plasmids through activation of initiation proteins. The chain is Chaperone protein DnaJ from Borreliella burgdorferi (strain ATCC 35210 / DSM 4680 / CIP 102532 / B31) (Borrelia burgdorferi).